The chain runs to 179 residues: Large ribosomal subunit protein uL5 (179 aa).

The protein belongs to the universal ribosomal protein uL5 family. In terms of assembly, part of the 50S ribosomal subunit; part of the 5S rRNA/L5/L18/L25 subcomplex. Contacts the 5S rRNA and the P site tRNA. Forms a bridge to the 30S subunit in the 70S ribosome.

Its function is as follows. This is one of the proteins that bind and probably mediate the attachment of the 5S RNA into the large ribosomal subunit, where it forms part of the central protuberance. In the 70S ribosome it contacts protein S13 of the 30S subunit (bridge B1b), connecting the 2 subunits; this bridge is implicated in subunit movement. Contacts the P site tRNA; the 5S rRNA and some of its associated proteins might help stabilize positioning of ribosome-bound tRNAs. This is Large ribosomal subunit protein uL5 from Shewanella woodyi (strain ATCC 51908 / MS32).